An 86-amino-acid polypeptide reads, in one-letter code: Small ribosomal subunit protein bS20 (86 aa).

The disordered stretch occupies residues 1 to 25 (MANIKSQIKRIRTNEKARQRNKAYK). The span at 12-25 (RTNEKARQRNKAYK) shows a compositional bias: basic and acidic residues.

This sequence belongs to the bacterial ribosomal protein bS20 family.

Binds directly to 16S ribosomal RNA. In Beutenbergia cavernae (strain ATCC BAA-8 / DSM 12333 / CCUG 43141 / JCM 11478 / NBRC 16432 / NCIMB 13614 / HKI 0122), this protein is Small ribosomal subunit protein bS20.